The chain runs to 356 residues: S-adenosylmethionine:tRNA ribosyltransferase-isomerase (356 aa).

Belongs to the QueA family. In terms of assembly, monomer.

It is found in the cytoplasm. It catalyses the reaction 7-aminomethyl-7-carbaguanosine(34) in tRNA + S-adenosyl-L-methionine = epoxyqueuosine(34) in tRNA + adenine + L-methionine + 2 H(+). It participates in tRNA modification; tRNA-queuosine biosynthesis. Transfers and isomerizes the ribose moiety from AdoMet to the 7-aminomethyl group of 7-deazaguanine (preQ1-tRNA) to give epoxyqueuosine (oQ-tRNA). The protein is S-adenosylmethionine:tRNA ribosyltransferase-isomerase of Escherichia coli O127:H6 (strain E2348/69 / EPEC).